The following is a 481-amino-acid chain: Aspartyl/glutamyl-tRNA(Asn/Gln) amidotransferase subunit B (481 aa).

It belongs to the GatB/GatE family. GatB subfamily. As to quaternary structure, heterotrimer of A, B and C subunits.

It catalyses the reaction L-glutamyl-tRNA(Gln) + L-glutamine + ATP + H2O = L-glutaminyl-tRNA(Gln) + L-glutamate + ADP + phosphate + H(+). The catalysed reaction is L-aspartyl-tRNA(Asn) + L-glutamine + ATP + H2O = L-asparaginyl-tRNA(Asn) + L-glutamate + ADP + phosphate + 2 H(+). Allows the formation of correctly charged Asn-tRNA(Asn) or Gln-tRNA(Gln) through the transamidation of misacylated Asp-tRNA(Asn) or Glu-tRNA(Gln) in organisms which lack either or both of asparaginyl-tRNA or glutaminyl-tRNA synthetases. The reaction takes place in the presence of glutamine and ATP through an activated phospho-Asp-tRNA(Asn) or phospho-Glu-tRNA(Gln). The chain is Aspartyl/glutamyl-tRNA(Asn/Gln) amidotransferase subunit B from Prosthecochloris aestuarii (strain DSM 271 / SK 413).